The chain runs to 115 residues: NADH-ubiquinone oxidoreductase chain 3 (115 aa).

The next 3 membrane-spanning stretches (helical) occupy residues Ile4–Leu24, Phe55–Ile75, and Thr86–Trp106.

Belongs to the complex I subunit 3 family. Core subunit of respiratory chain NADH dehydrogenase (Complex I) which is composed of 45 different subunits. Interacts with TMEM186. Interacts with TMEM242.

The protein localises to the mitochondrion inner membrane. It carries out the reaction a ubiquinone + NADH + 5 H(+)(in) = a ubiquinol + NAD(+) + 4 H(+)(out). In terms of biological role, core subunit of the mitochondrial membrane respiratory chain NADH dehydrogenase (Complex I) which catalyzes electron transfer from NADH through the respiratory chain, using ubiquinone as an electron acceptor. Essential for the catalytic activity of complex I. The protein is NADH-ubiquinone oxidoreductase chain 3 of Baiomys taylori (Northern pygmy mouse).